Here is a 271-residue protein sequence, read N- to C-terminus: Methylcorrinoid:tetrahydrofolate methyltransferase (271 aa).

One can recognise a Pterin-binding domain in the interval 1 to 247 (MIIIGEKLNG…GAIFATDALL (247 aa)).

This sequence belongs to the vitamin-B12 dependent methionine synthase family. In terms of assembly, the proline betaine:THF methyl transfer system is composed of two methyltransferases, MtpB and MtqA, and the corrinoid protein MtqC. The L-carnitine:THF methyl transfer system is composed of two methyltransferases, MtcB and MtqA, and the corrinoid protein MtqC.

The enzyme catalyses methyl-Co(III)-[quaternary-amine-specific corrinoid protein] + (6S)-5,6,7,8-tetrahydrofolate = Co(I)-[quaternary-amine-specific corrinoid protein] + (6S)-5-methyl-5,6,7,8-tetrahydrofolate + H(+). In terms of biological role, involved in the degradation of the quaternary amines L-proline betaine and L-carnitine. Component of a corrinoid-dependent methyltransferase system that transfers a methyl group from L-proline betaine or L-carnitine to tetrahydrofolate (THF), forming methyl-THF, a key intermediate in the Wood-Ljungdahl acetogenesis pathway. MtqA catalyzes the transfer of a methyl group from the methylated corrinoid protein MtqC to THF, forming methyl-THF. The polypeptide is Methylcorrinoid:tetrahydrofolate methyltransferase (Eubacterium limosum).